Here is a 116-residue protein sequence, read N- to C-terminus: Ribonuclease P protein component (116 aa).

This sequence belongs to the RnpA family. As to quaternary structure, consists of a catalytic RNA component (M1 or rnpB) and a protein subunit.

The catalysed reaction is Endonucleolytic cleavage of RNA, removing 5'-extranucleotides from tRNA precursor.. RNaseP catalyzes the removal of the 5'-leader sequence from pre-tRNA to produce the mature 5'-terminus. It can also cleave other RNA substrates such as 4.5S RNA. The protein component plays an auxiliary but essential role in vivo by binding to the 5'-leader sequence and broadening the substrate specificity of the ribozyme. The polypeptide is Ribonuclease P protein component (Gluconacetobacter diazotrophicus (strain ATCC 49037 / DSM 5601 / CCUG 37298 / CIP 103539 / LMG 7603 / PAl5)).